We begin with the raw amino-acid sequence, 251 residues long: Prolactin-7B1 (251 aa).

The N-terminal stretch at 1 to 29 (MNTSLTQLCFWALQILLMSNLLLWEDVVS) is a signal peptide. Residues Asn2 and Asn73 are each glycosylated (N-linked (GlcNAc...) asparagine). 2 disulfides stabilise this stretch: Cys100-Cys216 and Cys233-Cys241.

Belongs to the somatotropin/prolactin family. In terms of tissue distribution, expression restricted to placenta. Abundantly expressed in trophoblast cells of the junctional zone and trophoblasts migrating into the mesometrial decidua.

The protein resides in the secreted. This Mus musculus (Mouse) protein is Prolactin-7B1 (Prl7b1).